A 601-amino-acid polypeptide reads, in one-letter code: Putative pentatricopeptide repeat-containing protein At3g25060, mitochondrial (601 aa).

A mitochondrion-targeting transit peptide spans 1 to 80 (MVQTKHFCML…KVFDELPQRG (80 aa)). 13 PPR repeats span residues 49–79 (GSSI…LPQR), 80–114 (GVSV…KIQP), 115–149 (DSST…GYKN), 150–180 (DVFV…MAKR), 181–215 (DVIC…GFGR), 216–250 (DRVV…GLPM), 251–281 (NVVV…MMFK), 282–316 (TAVS…GFQP), 317–347 (DLVT…ILKR), 351–381 (DRVT…VGRK), 382–416 (DLVC…NIEP), 417–452 (DHAT…KIQP), and 453–487 (SEKH…NALP). The type E motif stretch occupies residues 488–563 (IWVALLSGCI…VPGYSAIEVN (76 aa)). Residues 564–594 (GELRTFLMEDLSHHEHYHMLQVLRNLKTEIR) are type E(+) motif.

The protein belongs to the PPR family. PCMP-E subfamily.

Its subcellular location is the mitochondrion. The polypeptide is Putative pentatricopeptide repeat-containing protein At3g25060, mitochondrial (PCMP-E96) (Arabidopsis thaliana (Mouse-ear cress)).